The chain runs to 98 residues: Co-chaperonin GroES (98 aa).

This sequence belongs to the GroES chaperonin family. In terms of assembly, heptamer of 7 subunits arranged in a ring. Interacts with the chaperonin GroEL.

It localises to the cytoplasm. Its function is as follows. Together with the chaperonin GroEL, plays an essential role in assisting protein folding. The GroEL-GroES system forms a nano-cage that allows encapsulation of the non-native substrate proteins and provides a physical environment optimized to promote and accelerate protein folding. GroES binds to the apical surface of the GroEL ring, thereby capping the opening of the GroEL channel. In Coprothermobacter proteolyticus (strain ATCC 35245 / DSM 5265 / OCM 4 / BT), this protein is Co-chaperonin GroES.